A 172-amino-acid polypeptide reads, in one-letter code: Translation initiation factor IF-3 (172 aa).

The protein belongs to the IF-3 family. In terms of assembly, monomer.

The protein resides in the cytoplasm. IF-3 binds to the 30S ribosomal subunit and shifts the equilibrium between 70S ribosomes and their 50S and 30S subunits in favor of the free subunits, thus enhancing the availability of 30S subunits on which protein synthesis initiation begins. The polypeptide is Translation initiation factor IF-3 (Campylobacter curvus (strain 525.92)).